Consider the following 161-residue polypeptide: MNTVIYPGTFDPITNGHKDLIARASRIFDKVVVAVAASPKKNPLFSLEERVDLVRQVVKPFPNVDVKGFSNLLADFVQQNQANIILRGLRAVSDFEYEFQLADMNRKLAPNVESLFLTPANHLSYISSTLIREIAALGGDVTEFVDPIVSKALQQQFALRK.

Thr9 lines the substrate pocket. ATP contacts are provided by residues 9–10 (TF) and His17. The substrate site is built by Lys41, Leu73, and Arg87. ATP is bound by residues 88 to 90 (GLR), Glu98, and 123 to 129 (LSYISST).

Belongs to the bacterial CoaD family. As to quaternary structure, homohexamer. Mg(2+) serves as cofactor.

It is found in the cytoplasm. The catalysed reaction is (R)-4'-phosphopantetheine + ATP + H(+) = 3'-dephospho-CoA + diphosphate. The protein operates within cofactor biosynthesis; coenzyme A biosynthesis; CoA from (R)-pantothenate: step 4/5. Reversibly transfers an adenylyl group from ATP to 4'-phosphopantetheine, yielding dephospho-CoA (dPCoA) and pyrophosphate. The polypeptide is Phosphopantetheine adenylyltransferase (Hahella chejuensis (strain KCTC 2396)).